Here is a 289-residue protein sequence, read N- to C-terminus: ATP synthase gamma chain (289 aa).

It belongs to the ATPase gamma chain family. As to quaternary structure, F-type ATPases have 2 components, CF(1) - the catalytic core - and CF(0) - the membrane proton channel. CF(1) has five subunits: alpha(3), beta(3), gamma(1), delta(1), epsilon(1). CF(0) has three main subunits: a, b and c.

The protein resides in the cell inner membrane. Produces ATP from ADP in the presence of a proton gradient across the membrane. The gamma chain is believed to be important in regulating ATPase activity and the flow of protons through the CF(0) complex. This Acinetobacter baumannii (strain AB307-0294) protein is ATP synthase gamma chain.